The chain runs to 768 residues: DNA replication licensing factor MCM3 homolog 3 (768 aa).

The region spanning 290–497 is the MCM domain; the sequence is TFDLLGNSLA…IDRQISEHVA (208 aa). 340-347 provides a ligand contact to ATP; sequence GDPSVAKS. Residues 472-475 carry the Arginine finger motif; that stretch reads SRFD. The segment covering 661–670 has biased composition (basic and acidic residues); sequence EMKQQADHDA. Residues 661-690 form a disordered region; sequence EMKQQADHDAGATGGTVDGHGSSGNDPMDV. A compositionally biased stretch (gly residues) spans 672-682; sequence ATGGTVDGHGS.

Belongs to the MCM family.

The protein localises to the nucleus. The enzyme catalyses ATP + H2O = ADP + phosphate + H(+). In terms of biological role, acts as a factor that allows the DNA to undergo a single round of replication per cell cycle. Required for DNA replication and cell proliferation. May act as a component of the MCM complex which is the putative replicative helicase of the replication licensing system in eukaryotic cells. The chain is DNA replication licensing factor MCM3 homolog 3 (ROA3) from Zea mays (Maize).